The chain runs to 440 residues: Transposon Ty1-LR2 Gag polyprotein (440 aa).

3 stretches are compositionally biased toward polar residues: residues 1-23, 48-60, and 127-152; these read MESQ…SVTS, TKAN…TPAS, and QSQF…GNTF. Disordered regions lie at residues 1-93, 126-174, and 352-440; these read MESQ…MMTQ, PQSQ…PPPM, and GSRN…PGTY. Over residues 153–165 the composition is skewed to low complexity; it reads TDSSSADSDMTST. The tract at residues 299-401 is RNA-binding; that stretch reads NNGIHINNKV…NSKSKTARAH (103 aa). Residues 402 to 418 show a composition bias toward low complexity; it reads NVSTSNNSPSTDNDSIS. Ser-416 bears the Phosphoserine mark. The span at 419 to 428 shows a compositional bias: polar residues; sequence KSTTEPIQLN. Over residues 429–440 the composition is skewed to basic and acidic residues; it reads NKHDLHLRPGTY.

Homotrimer.

Its subcellular location is the cytoplasm. In terms of biological role, capsid protein (CA) is the structural component of the virus-like particle (VLP), forming the shell that encapsulates the retrotransposons dimeric RNA genome. The particles are assembled from trimer-clustered units and there are holes in the capsid shells that allow for the diffusion of macromolecules. CA also has nucleocapsid-like chaperone activity, promoting primer tRNA(i)-Met annealing to the multipartite primer-binding site (PBS), dimerization of Ty1 RNA and initiation of reverse transcription. In Saccharomyces cerevisiae (strain ATCC 204508 / S288c) (Baker's yeast), this protein is Transposon Ty1-LR2 Gag polyprotein (TY1A-LR2).